Reading from the N-terminus, the 370-residue chain is Cobalt-precorrin-5B C(1)-methyltransferase (370 aa).

Belongs to the CbiD family.

The catalysed reaction is Co-precorrin-5B + S-adenosyl-L-methionine = Co-precorrin-6A + S-adenosyl-L-homocysteine. It functions in the pathway cofactor biosynthesis; adenosylcobalamin biosynthesis; cob(II)yrinate a,c-diamide from sirohydrochlorin (anaerobic route): step 6/10. Catalyzes the methylation of C-1 in cobalt-precorrin-5B to form cobalt-precorrin-6A. This is Cobalt-precorrin-5B C(1)-methyltransferase from Pseudomonas syringae pv. tomato (strain ATCC BAA-871 / DC3000).